Here is a 766-residue protein sequence, read N- to C-terminus: NADH-dependent flavin oxidoreductase iliE (766 aa).

Polar residues predominate over residues 1-13 (MSEQLGSHITTPS). A disordered region spans residues 1–24 (MSEQLGSHITTPSSHDDASKDKRP). Over residues 14 to 24 (SHDDASKDKRP) the composition is skewed to basic and acidic residues. A glycan (N-linked (GlcNAc...) asparagine) is linked at N30. Residue 61-64 (AATA) participates in FMN binding. N-linked (GlcNAc...) asparagine glycosylation is found at N70 and N136. Q143 is an FMN binding site. 224–227 (HAGH) lines the substrate pocket. 385–386 (AR) serves as a coordination point for FMN. One can recognise a J domain in the interval 551–622 (TPYDILAMRK…SKRSLYDTQG (72 aa)). N634, N650, and N654 each carry an N-linked (GlcNAc...) asparagine glycan. A helical transmembrane segment spans residues 675-695 (MYMSNGVFATLVVMMCMIGAF).

It belongs to the NADH:flavin oxidoreductase/NADH oxidase family.

The protein resides in the membrane. Functionally, NADH-dependent flavin oxidoreductase; part of the gene cluster that mediates the biosynthesis of ilicicolin H, a 4-hydroxy-2-pyridonealkaloid that has potent and broad antifungal activities by inhibiting the mitochondrial respiration chain. The biosynthesis of ilicicolin H starts with formation of the tetramic acid by the hybrid PKS-NRPS synthetase iliA with the partnering trans-enoyl reductase iliB since iliA lacks a designated enoylreductase (ER) domain. The cytochrome P450 monooxygenase iliC then catalyzes the ring expansion of the tetramate to the acyclic 2-pyridone. The pericyclase iliD further converts the acyclic 2-pyridone into 8-epi-ilicicolin H. 8-epi-ilicicolin H might then spontaneously convert to ilicicolin H since ilicicolin H is produced in the absence of the epimerase iliE, in contrast to what was observed for the Talaromyces variabilis ilicolin H biosynthetic pathway. In Neonectria sp. (strain DH2), this protein is NADH-dependent flavin oxidoreductase iliE.